A 167-amino-acid chain; its full sequence is Peptide deformylase (167 aa).

The Fe cation site is built by cysteine 91 and histidine 133. Glutamate 134 is a catalytic residue. Histidine 137 provides a ligand contact to Fe cation.

Belongs to the polypeptide deformylase family. Fe(2+) serves as cofactor.

It catalyses the reaction N-terminal N-formyl-L-methionyl-[peptide] + H2O = N-terminal L-methionyl-[peptide] + formate. In terms of biological role, removes the formyl group from the N-terminal Met of newly synthesized proteins. Requires at least a dipeptide for an efficient rate of reaction. N-terminal L-methionine is a prerequisite for activity but the enzyme has broad specificity at other positions. The protein is Peptide deformylase of Chromobacterium violaceum (strain ATCC 12472 / DSM 30191 / JCM 1249 / CCUG 213 / NBRC 12614 / NCIMB 9131 / NCTC 9757 / MK).